Consider the following 1998-residue polypeptide: Receptor-type tyrosine-protein phosphatase beta (1998 aa).

Positions methionine 1–alanine 22 are cleaved as a signal peptide. Fibronectin type-III domains follow at residues glutamate 23–threonine 109, proline 113–proline 206, valine 207–methionine 291, glutamate 292–leucine 384, proline 378–threonine 466, alanine 470–alanine 556, glutamine 557–threonine 642, valine 643–aspartate 733, lysine 734–glutamate 821, proline 822–asparagine 913, proline 908–threonine 994, valine 995–alanine 1088, proline 1086–valine 1173, alanine 1176–serine 1263, proline 1264–aspartate 1357, lysine 1358–proline 1449, and proline 1449–alanine 1551. Residues glutamate 23 to glutamate 1622 are Extracellular-facing. 6 N-linked (GlcNAc...) asparagine glycosylation sites follow: asparagine 28, asparagine 53, asparagine 75, asparagine 173, asparagine 199, and asparagine 268. Residues asparagine 415, asparagine 422, asparagine 480, asparagine 575, asparagine 599, and asparagine 653 are each glycosylated (N-linked (GlcNAc...) asparagine). Asparagine 830 carries N-linked (GlcNAc...) asparagine glycosylation. Asparagine 1041, asparagine 1097, asparagine 1164, asparagine 1186, asparagine 1213, asparagine 1275, asparagine 1368, asparagine 1471, asparagine 1475, and asparagine 1519 each carry an N-linked (GlcNAc...) asparagine glycan. Residues glycine 1623–cysteine 1643 traverse the membrane as a helical segment. Residues arginine 1644–arginine 1997 are Cytoplasmic-facing. The Tyrosine-protein phosphatase domain occupies leucine 1704–valine 1964. Residues aspartate 1871, cysteine 1905 to arginine 1911, and glutamine 1949 contribute to the substrate site. Cysteine 1905 serves as the catalytic Phosphocysteine intermediate. Position 1982 is a phosphotyrosine (tyrosine 1982).

It belongs to the protein-tyrosine phosphatase family. Receptor class 3 subfamily. In terms of assembly, monomer. Interacts with TEK. Interacts via fibronectin type-III 17 domain with CDH5. Detected in a complex with CNTN1 and NRCAM. Interacts (phosphorylated form) with FYN and GRB2. Interacts with IGFBP2. In terms of tissue distribution, expression is very high in the vasculature of lung, spleen, and kidney, as well as in the heart valves, and is also present in the endothelium of arterioles and venules. Also expressed in tumor vasculature.

It is found in the membrane. It catalyses the reaction O-phospho-L-tyrosyl-[protein] + H2O = L-tyrosyl-[protein] + phosphate. Plays an important role in blood vessel remodeling and angiogenesis. Not necessary for the initial formation of blood vessels, but is essential for their maintenance and remodeling. Can induce dephosphorylation of TEK/TIE2, CDH5/VE-cadherin and KDR/VEGFR-2. Regulates angiopoietin-TIE2 signaling in endothelial cells. Acts as a negative regulator of TIE2, and controls TIE2 driven endothelial cell proliferation, which in turn affects blood vessel remodeling during embryonic development and determines blood vessel size during perinatal growth. Essential for the maintenance of endothelial cell contact integrity and for the adhesive function of VE-cadherin in endothelial cells and this requires the presence of plakoglobin. In Mus musculus (Mouse), this protein is Receptor-type tyrosine-protein phosphatase beta (Ptprb).